Here is a 494-residue protein sequence, read N- to C-terminus: Metal cation symporter ZIP14 (494 aa).

The first 34 residues, 1-34 (MTLRRASGCRQLTLTIGLALTLGLLQWPIGDVRG), serve as a signal peptide directing secretion. Residues 35-152 (QDGASPAQVL…PTEAEVWGYG (118 aa)) lie on the Extracellular side of the membrane. A helical transmembrane segment spans residues 153–173 (LLCVTVISLCSLVGASVVPFM). Residues 174–181 (RKTFYKRL) are Cytoplasmic-facing. The chain crosses the membrane as a helical span at residues 182–202 (LLYFIALAIGTLYSNALFQLI). At 203-219 (PEAFGFDPMEDYYVPKS) the chain is on the extracellular side. The chain crosses the membrane as a helical span at residues 220–240 (AVVFGGFYLFFFTEKILKMIL). Topologically, residues 241-397 (KPKDTGGHGH…LLNAGMSIQQ (157 aa)) are cytoplasmic. Residues 248 to 255 (HGHGHSHF) carry the HHHGHXHX-motif motif. The short motif at 376–381 (EEFPHE) is the XEXPHE-motif element. Residues 398–418 (ALFFNFLSACCCYLGMGFGIL) form a helical membrane-spanning segment. At 419–426 (AGNNFSPN) the chain is on the extracellular side. The chain crosses the membrane as a helical span at residues 427 to 447 (WIFALAGGMFLYIALADMFPE). The Cytoplasmic portion of the chain corresponds to 448–462 (MNEVSREEEEAGGSG). A helical transmembrane segment spans residues 463-483 (FLLTFALQNAGLLTGFAIMLV). Residues 484-494 (LTIYSGQIQLG) lie on the Extracellular side of the membrane.

Belongs to the ZIP transporter (TC 2.A.5) family. As to quaternary structure, homotrimer.

The protein resides in the cell membrane. The protein localises to the apical cell membrane. Its subcellular location is the basolateral cell membrane. It localises to the early endosome membrane. It is found in the late endosome membrane. The protein resides in the lysosome membrane. It catalyses the reaction Zn(2+)(out) + 2 hydrogencarbonate(out) = Zn(2+)(in) + 2 hydrogencarbonate(in). The enzyme catalyses Mn(2+)(out) + 2 hydrogencarbonate(out) = Mn(2+)(in) + 2 hydrogencarbonate(in). It carries out the reaction Fe(2+)(out) + 2 hydrogencarbonate(out) = Fe(2+)(in) + 2 hydrogencarbonate(in). The catalysed reaction is Cd(2+)(out) + 2 hydrogencarbonate(out) = Cd(2+)(in) + 2 hydrogencarbonate(in). In terms of biological role, broad-scope metal ion transporter with a preference for zinc uptake. Also mediates cellular uptake of nontransferrin-bound iron. Electroneutral transporter of the plasma membrane mediating the cellular uptake of the divalent metal cations zinc, manganese and iron that are important for tissue homeostasis, metabolism, development and immunity. Functions as an energy-dependent symporter, transporting through the membranes an electroneutral complex composed of a divalent metal cation and two bicarbonate anions. Beside these endogenous cellular substrates, can also import cadmium a non-essential metal which is cytotoxic and carcinogenic. The sequence is that of Metal cation symporter ZIP14 from Danio rerio (Zebrafish).